Consider the following 333-residue polypeptide: 5-formaminoimidazole-4-carboxamide-1-(beta)-D-ribofuranosyl 5'-monophosphate synthetase (333 aa).

The 5-amino-1-(5-phospho-beta-D-ribosyl)imidazole-4-carboxamide site is built by His10 and Ser70. The ATP-grasp domain occupies 91-324 (KEVLKWESDR…IAREIKIAIE (234 aa)). ATP contacts are provided by residues 121-181 (PDDI…VPIY) and Glu203. Residue Asn231 participates in 5-amino-1-(5-phospho-beta-D-ribosyl)imidazole-4-carboxamide binding. The Mg(2+) site is built by Glu269 and Glu282.

The protein belongs to the phosphohexose mutase family. Mg(2+) is required as a cofactor. Mn(2+) serves as cofactor.

The catalysed reaction is 5-amino-1-(5-phospho-beta-D-ribosyl)imidazole-4-carboxamide + formate + ATP = 5-formamido-1-(5-phospho-D-ribosyl)imidazole-4-carboxamide + ADP + phosphate. Its pathway is purine metabolism; IMP biosynthesis via de novo pathway; 5-formamido-1-(5-phospho-D-ribosyl)imidazole-4-carboxamide from 5-amino-1-(5-phospho-D-ribosyl)imidazole-4-carboxamide (formate route): step 1/1. Catalyzes the ATP- and formate-dependent formylation of 5-aminoimidazole-4-carboxamide-1-beta-d-ribofuranosyl 5'-monophosphate (AICAR) to 5-formaminoimidazole-4-carboxamide-1-beta-d-ribofuranosyl 5'-monophosphate (FAICAR) in the absence of folates. In Pyrococcus horikoshii (strain ATCC 700860 / DSM 12428 / JCM 9974 / NBRC 100139 / OT-3), this protein is 5-formaminoimidazole-4-carboxamide-1-(beta)-D-ribofuranosyl 5'-monophosphate synthetase.